The primary structure comprises 369 residues: RING-H2 finger protein ATL47 (369 aa).

A helical membrane pass occupies residues 52–72; sequence IILFIIVLLSVIFFICSILHL. An RING-type; atypical zinc finger spans residues 144–186; sequence CAVCLCEFSEDDKLRLLPNCSHAFHIDCIDTWLLSNSTCPLCR. The segment at 332–355 is disordered; sequence NNHPSETNLVVGGSSSSSSYVCSG. Residues 341 to 355 are compositionally biased toward low complexity; that stretch reads VVGGSSSSSSYVCSG.

This sequence belongs to the RING-type zinc finger family. ATL subfamily.

It is found in the membrane. It catalyses the reaction S-ubiquitinyl-[E2 ubiquitin-conjugating enzyme]-L-cysteine + [acceptor protein]-L-lysine = [E2 ubiquitin-conjugating enzyme]-L-cysteine + N(6)-ubiquitinyl-[acceptor protein]-L-lysine.. The protein operates within protein modification; protein ubiquitination. This Arabidopsis thaliana (Mouse-ear cress) protein is RING-H2 finger protein ATL47 (ATL47).